A 281-amino-acid polypeptide reads, in one-letter code: Pantothenate synthetase (281 aa).

30-37 (MGNLHQGH) serves as a coordination point for ATP. Catalysis depends on His-37, which acts as the Proton donor. Gln-61 serves as a coordination point for (R)-pantoate. Gln-61 is a binding site for beta-alanine. 149-152 (GNKD) is an ATP binding site. Position 155 (Gln-155) interacts with (R)-pantoate. ATP-binding positions include Ile-178 and 186–189 (MSSR).

This sequence belongs to the pantothenate synthetase family. In terms of assembly, homodimer.

The protein resides in the cytoplasm. The catalysed reaction is (R)-pantoate + beta-alanine + ATP = (R)-pantothenate + AMP + diphosphate + H(+). It participates in cofactor biosynthesis; (R)-pantothenate biosynthesis; (R)-pantothenate from (R)-pantoate and beta-alanine: step 1/1. Its function is as follows. Catalyzes the condensation of pantoate with beta-alanine in an ATP-dependent reaction via a pantoyl-adenylate intermediate. In Shewanella sp. (strain MR-7), this protein is Pantothenate synthetase.